Consider the following 342-residue polypeptide: Trace amine-associated receptor 8 (342 aa).

The Extracellular portion of the chain corresponds to methionine 1–arginine 31. Residues asparagine 4 and asparagine 18 are each glycosylated (N-linked (GlcNAc...) asparagine). Disulfide bonds link cysteine 21/cysteine 185 and cysteine 104/cysteine 189. The helical transmembrane segment at valine 32 to valine 52 threads the bilayer. The Cytoplasmic segment spans residues methionine 53 to asparagine 67. Residues phenylalanine 68 to serine 88 form a helical membrane-spanning segment. The Extracellular portion of the chain corresponds to methionine 89–aspartate 111. A helical membrane pass occupies residues valine 112 to valine 132. The Cytoplasmic segment spans residues valine 133–serine 146. A helical membrane pass occupies residues valine 147–phenylalanine 167. The Extracellular segment spans residues tyrosine 168 to glutamine 195. Residues glycine 196–tyrosine 216 form a helical membrane-spanning segment. The Cytoplasmic portion of the chain corresponds to serine 217–threonine 258. The helical transmembrane segment at leucine 259–isoleucine 279 threads the bilayer. A topological domain (extracellular) is located at residue aspartate 280. A helical transmembrane segment spans residues alanine 281–tyrosine 301. The Cytoplasmic portion of the chain corresponds to asparagine 302–glutamate 342.

The protein belongs to the G-protein coupled receptor 1 family. Expressed in kidney and amygdala. Not expressed in other tissues or brain regions tested.

The protein resides in the cell membrane. Olfactory receptor specific for trace amines. Trace amine compounds are enriched in animal body fluids and act on trace amine-associated receptors (TAARs) to elicit both intraspecific and interspecific innate behaviors. Ligand-binding causes a conformation change that triggers signaling via G alpha proteins, possibly G(i)/G(o) G alpha proteins. This Homo sapiens (Human) protein is Trace amine-associated receptor 8 (TAAR8).